The sequence spans 264 residues: Thiazole synthase (264 aa).

Lys-106 functions as the Schiff-base intermediate with DXP in the catalytic mechanism. Residues Gly-167, 193 to 194 (AG), and 215 to 216 (NS) contribute to the 1-deoxy-D-xylulose 5-phosphate site.

This sequence belongs to the ThiG family. As to quaternary structure, homotetramer. Forms heterodimers with either ThiH or ThiS.

The protein localises to the cytoplasm. It catalyses the reaction [ThiS sulfur-carrier protein]-C-terminal-Gly-aminoethanethioate + 2-iminoacetate + 1-deoxy-D-xylulose 5-phosphate = [ThiS sulfur-carrier protein]-C-terminal Gly-Gly + 2-[(2R,5Z)-2-carboxy-4-methylthiazol-5(2H)-ylidene]ethyl phosphate + 2 H2O + H(+). It functions in the pathway cofactor biosynthesis; thiamine diphosphate biosynthesis. Its function is as follows. Catalyzes the rearrangement of 1-deoxy-D-xylulose 5-phosphate (DXP) to produce the thiazole phosphate moiety of thiamine. Sulfur is provided by the thiocarboxylate moiety of the carrier protein ThiS. In vitro, sulfur can be provided by H(2)S. This chain is Thiazole synthase, found in Pseudomonas fluorescens (strain SBW25).